The following is a 254-amino-acid chain: Probable transcriptional regulator ycf27 (254 aa).

Residues 16-129 (KVLIVDDEAS…ELEARIRAVL (114 aa)) enclose the Response regulatory domain. At Asp-65 the chain carries 4-aspartylphosphate. The segment at residues 85-103 (DVPIIMLTALGDVADRITG) is a DNA-binding region (H-T-H motif). Positions 144-245 (SGIINFNFLT…ARGTGYLFQR (102 aa)) form a DNA-binding region, ompR/PhoB-type.

It localises to the plastid. The protein resides in the chloroplast. Probable promoter-specific protein mediating the interaction between DNA and RNA polymerase. In Guillardia theta (Cryptophyte), this protein is Probable transcriptional regulator ycf27 (ycf27).